The following is a 170-amino-acid chain: Ribosome maturation factor RimM (170 aa).

One can recognise a PRC barrel domain in the interval 98–170; it reads PDEYYWVDLE…LIVVDWDPDF (73 aa).

The protein belongs to the RimM family. Binds ribosomal protein uS19.

The protein localises to the cytoplasm. Its function is as follows. An accessory protein needed during the final step in the assembly of 30S ribosomal subunit, possibly for assembly of the head region. Essential for efficient processing of 16S rRNA. May be needed both before and after RbfA during the maturation of 16S rRNA. It has affinity for free ribosomal 30S subunits but not for 70S ribosomes. The sequence is that of Ribosome maturation factor RimM from Xanthomonas oryzae pv. oryzae (strain MAFF 311018).